Consider the following 237-residue polypeptide: Golgi to ER traffic protein 1 (237 aa).

Topologically, residues 1–4 (MDSG) are lumenal. Residues 5 to 24 (GWIVYCCIFFILLGKVLEYT) traverse the membrane as a helical segment. Residues 25-110 (SSYQDKWFTK…SSKKVFGRVK (86 aa)) lie on the Cytoplasmic side of the membrane. Positions 40 to 99 (EARKLNSQYHELLSERLRLQEENHSISAQDNYARWTKNNRKLGELDKKLGTIRDKLQETN) form a coiled coil. A helical transmembrane segment spans residues 111-131 (LIGLTIPFWILKIWQRSHVVY). Topologically, residues 132–176 (HFPKQDLFPKLVTGVWARGWLYLALGPLQYLRNGSLNIQDYAPHG) are lumenal. Residues 177–193 (VSLGIWIWALQATINTL) traverse the membrane as a helical segment. Residues 194–237 (EFLVKQVILEKPVSPPPQKSKSATKAETKRPEKLEITDDKVELD) lie on the Cytoplasmic side of the membrane. Residues 205-237 (PVSPPPQKSKSATKAETKRPEKLEITDDKVELD) form a disordered region. A compositionally biased stretch (basic and acidic residues) spans 217 to 237 (TKAETKRPEKLEITDDKVELD).

This sequence belongs to the WRB/GET1 family. In terms of assembly, component of the Golgi to ER traffic (GET) complex, which is composed of GET1, GET2 and GET3. Within the complex, GET1 and GET2 form a heterotetramer which is stabilized by phosphatidylinositol binding and which binds to the GET3 homodimer.

It localises to the endoplasmic reticulum membrane. It is found in the golgi apparatus membrane. Required for the post-translational delivery of tail-anchored (TA) proteins to the endoplasmic reticulum. Together with GET2, acts as a membrane receptor for soluble GET3, which recognizes and selectively binds the transmembrane domain of TA proteins in the cytosol. The GET complex cooperates with the HDEL receptor ERD2 to mediate the ATP-dependent retrieval of resident ER proteins that contain a C-terminal H-D-E-L retention signal from the Golgi to the ER. This is Golgi to ER traffic protein 1 from Zygosaccharomyces rouxii (strain ATCC 2623 / CBS 732 / NBRC 1130 / NCYC 568 / NRRL Y-229).